A 306-amino-acid chain; its full sequence is tRNA dimethylallyltransferase (306 aa).

Residue 12–19 (GPTASGKT) participates in ATP binding. 14–19 (TASGKT) contributes to the substrate binding site. Interaction with substrate tRNA regions lie at residues 37–40 (DSAL), 161–165 (QRLSR), and 242–247 (RCVGYR).

Belongs to the IPP transferase family. As to quaternary structure, monomer. The cofactor is Mg(2+).

The catalysed reaction is adenosine(37) in tRNA + dimethylallyl diphosphate = N(6)-dimethylallyladenosine(37) in tRNA + diphosphate. Functionally, catalyzes the transfer of a dimethylallyl group onto the adenine at position 37 in tRNAs that read codons beginning with uridine, leading to the formation of N6-(dimethylallyl)adenosine (i(6)A). The protein is tRNA dimethylallyltransferase of Shewanella amazonensis (strain ATCC BAA-1098 / SB2B).